The primary structure comprises 367 residues: Probable cinnamyl alcohol dehydrogenase (367 aa).

C47 provides a ligand contact to Zn(2+). Position 49 (T49) interacts with NADP(+). Residues H69, E70, C100, C103, C106, C114, and C163 each coordinate Zn(2+). NADP(+) contacts are provided by residues T167, 188-193 (GLGGVG), 211-216 (SSSSKK), T251, G275, and 298-300 (SFI).

The protein belongs to the zinc-containing alcohol dehydrogenase family. In terms of assembly, homodimer. Zn(2+) is required as a cofactor.

The catalysed reaction is (E)-cinnamyl alcohol + NADP(+) = (E)-cinnamaldehyde + NADPH + H(+). It carries out the reaction (E)-coniferol + NADP(+) = (E)-coniferaldehyde + NADPH + H(+). The enzyme catalyses (E)-sinapyl alcohol + NADP(+) = (E)-sinapaldehyde + NADPH + H(+). It catalyses the reaction (E)-4-coumaroyl alcohol + NADP(+) = (E)-4-coumaraldehyde + NADPH + H(+). The catalysed reaction is (E)-caffeyl alcohol + NADP(+) = (E)-caffeyl aldehyde + NADPH + H(+). The protein operates within aromatic compound metabolism; phenylpropanoid biosynthesis. Functionally, involved in lignin biosynthesis. May catalyze the final step specific for the production of lignin monomers, like coniferyl alcohol, sinapyl alcohol and 4-coumaryl alcohol. This Zea mays (Maize) protein is Probable cinnamyl alcohol dehydrogenase.